We begin with the raw amino-acid sequence, 418 residues long: Cyclin-A1 (418 aa).

The protein belongs to the cyclin family. Cyclin AB subfamily. As to quaternary structure, interacts with the CDK1 and the CDK2 protein kinases to form a serine/threonine kinase holoenzyme complex. The cyclin subunit imparts substrate specificity to the complex.

The protein resides in the nucleus. Its function is as follows. May be involved in the control of the cell cycle at the G1/S (start) and G2/M (mitosis) transitions. This is Cyclin-A1 (ccna1) from Xenopus laevis (African clawed frog).